The chain runs to 436 residues: GTPase Der (436 aa).

EngA-type G domains follow at residues 4–167 (SVVA…PNES) and 176–351 (IYFS…ESHT). GTP contacts are provided by residues 10-17 (GRPNVGKS), 57-61 (DTGGI), 119-122 (NKMD), 182-189 (GRPNVGKS), 229-233 (DTAGM), and 294-297 (NKWD). The 85-residue stretch at 352–436 (KRIPTNVLND…PIKLFARRRQ (85 aa)) folds into the KH-like domain.

It belongs to the TRAFAC class TrmE-Era-EngA-EngB-Septin-like GTPase superfamily. EngA (Der) GTPase family. As to quaternary structure, associates with the 50S ribosomal subunit.

GTPase that plays an essential role in the late steps of ribosome biogenesis. In Oceanobacillus iheyensis (strain DSM 14371 / CIP 107618 / JCM 11309 / KCTC 3954 / HTE831), this protein is GTPase Der.